The sequence spans 262 residues: Indole-3-glycerol phosphate synthase (262 aa).

It belongs to the TrpC family.

The enzyme catalyses 1-(2-carboxyphenylamino)-1-deoxy-D-ribulose 5-phosphate + H(+) = (1S,2R)-1-C-(indol-3-yl)glycerol 3-phosphate + CO2 + H2O. Its pathway is amino-acid biosynthesis; L-tryptophan biosynthesis; L-tryptophan from chorismate: step 4/5. The protein is Indole-3-glycerol phosphate synthase of Dechloromonas aromatica (strain RCB).